The following is a 285-amino-acid chain: Protoheme IX farnesyltransferase (285 aa).

Helical transmembrane passes span 16 to 36, 40 to 60, 106 to 126, 136 to 156, 165 to 185, 217 to 237, and 265 to 285; these read AKPK…ILAF, WYNL…SMII, LLAN…YVFV, WLNI…GYAA, SLLL…ALAL, ILMI…YVII, and YKFS…SFIL.

This sequence belongs to the UbiA prenyltransferase family. Protoheme IX farnesyltransferase subfamily.

The protein localises to the cell membrane. The enzyme catalyses heme b + (2E,6E)-farnesyl diphosphate + H2O = Fe(II)-heme o + diphosphate. Its pathway is porphyrin-containing compound metabolism; heme O biosynthesis; heme O from protoheme: step 1/1. In terms of biological role, converts heme B (protoheme IX) to heme O by substitution of the vinyl group on carbon 2 of heme B porphyrin ring with a hydroxyethyl farnesyl side group. This is Protoheme IX farnesyltransferase from Sulfolobus acidocaldarius (strain ATCC 33909 / DSM 639 / JCM 8929 / NBRC 15157 / NCIMB 11770).